A 621-amino-acid chain; its full sequence is Nuclear distribution protein nudE homolog 1 (621 aa).

Polar residues-rich tracts occupy residues 1-20 and 231-263; these read MPSA…SRSD and RSPS…TLKT. Disordered regions lie at residues 1 to 21, 218 to 372, 389 to 537, and 569 to 621; these read MPSA…RSDQ, ELQN…PKSG, ERVQ…GVVN, and ISTP…GETY. Residues 18–219 are a coiled coil; that stretch reads RSDQLAWYKS…IHEKLRNAEL (202 aa). Low complexity-rich tracts occupy residues 264 to 288 and 300 to 310; these read SLMS…RKSM and SASDSSFGSRS. Residues 323–341 are compositionally biased toward polar residues; that stretch reads SRATSYAFTSNRPTPSVTN. Low complexity-rich tracts occupy residues 353-362, 404-414, and 469-496; these read NENTNKHNNN, SPSRTSSRSGS, and SRPS…PSTR. Residues 599 to 613 show a composition bias toward basic and acidic residues; that stretch reads DRLEGDMGPPERKSN.

This sequence belongs to the nudE family. As to quaternary structure, self-associates. Interacts with nudF.

The protein resides in the cytoplasm. The protein localises to the cytoskeleton. Its function is as follows. Required for nuclear migration within hyphae during vegetative growth. In Aspergillus fumigatus (strain ATCC MYA-4609 / CBS 101355 / FGSC A1100 / Af293) (Neosartorya fumigata), this protein is Nuclear distribution protein nudE homolog 1 (nde1).